The chain runs to 389 residues: Chitin-binding protein CbpD (389 aa).

Positions 1 to 25 are cleaved as a signal peptide; the sequence is MKHYSATLALLPLTLALFLPQAAHA. The Chitin-binding type-4 domain occupies 26–208; the sequence is HGSMETPPSR…EAFYACIDVS (183 aa).

Post-translationally, can be detected in the extracellular supernatant as a 43 kDa protein and a 23 kDa protein, both proteins have the same N-terminus. Only the larger protein binds chitin, which may protect it from further processing and/or degradation by elastase (lasB). It is not clear whether the short form is functional or a degradation product.

The protein localises to the secreted. Its function is as follows. Binds chitin but does not hydrolyze it, has no detectable protease or staphylolytic activity. In Pseudomonas aeruginosa (strain ATCC 15692 / DSM 22644 / CIP 104116 / JCM 14847 / LMG 12228 / 1C / PRS 101 / PAO1), this protein is Chitin-binding protein CbpD.